Consider the following 255-residue polypeptide: Ribonuclease HII (255 aa).

The RNase H type-2 domain occupies 72 to 255 (NYIAGVDEAG…RLSFVKNFVE (184 aa)). A divalent metal cation-binding residues include aspartate 78, glutamate 79, and aspartate 170.

Belongs to the RNase HII family. Requires Mn(2+) as cofactor. The cofactor is Mg(2+).

The protein localises to the cytoplasm. It carries out the reaction Endonucleolytic cleavage to 5'-phosphomonoester.. Functionally, endonuclease that specifically degrades the RNA of RNA-DNA hybrids. The chain is Ribonuclease HII from Ruminiclostridium cellulolyticum (strain ATCC 35319 / DSM 5812 / JCM 6584 / H10) (Clostridium cellulolyticum).